Reading from the N-terminus, the 229-residue chain is DNA mismatch repair protein MutH (229 aa).

The protein belongs to the MutH family.

The protein localises to the cytoplasm. Sequence-specific endonuclease that cleaves unmethylated GATC sequences. It is involved in DNA mismatch repair. The polypeptide is DNA mismatch repair protein MutH (Escherichia coli O17:K52:H18 (strain UMN026 / ExPEC)).